The sequence spans 469 residues: Carboxypeptidase Q (469 aa).

The first 19 residues, 1–19, serve as a signal peptide directing secretion; sequence MKTLILTLLSLYELQLCCG. Residues 20-42 constitute a propeptide that is removed on maturation; the sequence is AYNQNIRSQRKFEMIKTEISSYK. N-linked (GlcNAc...) asparagine glycans are attached at residues N59 and N159. The Zn(2+) site is built by H288 and D300. E334 acts as the Nucleophile in catalysis. E335 contributes to the Zn(2+) binding site. N351 is a glycosylation site (N-linked (GlcNAc...) asparagine). Position 362 (D362) interacts with Zn(2+). N-linked (GlcNAc...) asparagine glycosylation occurs at N394. H432 lines the Zn(2+) pocket.

The protein belongs to the peptidase M28 family. As to quaternary structure, homodimer. The monomeric form is inactive while the homodimer is active.

The protein resides in the endoplasmic reticulum. It localises to the golgi apparatus. The protein localises to the lysosome. Its subcellular location is the secreted. In terms of biological role, carboxypeptidase that may play an important role in the hydrolysis of circulating peptides. Catalyzes more efficiently the hydrolysis of dipeptides with unsubstituted terminals into amino acids. This Xenopus laevis (African clawed frog) protein is Carboxypeptidase Q (cpq).